A 250-amino-acid polypeptide reads, in one-letter code: Tetrathionate reductase subunit B (250 aa).

Positions 1–33 (MWTGVNMDSSKRQFLQQLGVLTAGASLVPLAEA) form a signal peptide, tat-type signal. 3 4Fe-4S ferredoxin-type domains span residues 50–79 (YAML…PQGA), 97–128 (VTNV…QRED), and 129–158 (GIVV…INHE). [4Fe-4S] cluster contacts are provided by cysteine 59, cysteine 62, cysteine 65, cysteine 69, cysteine 106, cysteine 109, cysteine 114, cysteine 118, cysteine 138, cysteine 141, cysteine 144, cysteine 148, cysteine 165, cysteine 168, cysteine 180, and cysteine 184.

In terms of assembly, probably composed of three subunits: TtrA, TtrB and TtrC. Predicted to be exported by the Tat system. The position of the signal peptide cleavage has not been experimentally proven.

Its subcellular location is the periplasm. It is found in the cell inner membrane. In terms of biological role, part of a membrane-bound tetrathionate reductase that catalyzes the reduction of tetrathionate to thiosulfate. TtrB is probably involved in transfer of electrons from TtrC to TtrA. During mice infection, the ability to use tetrathionate as an electron acceptor is a growth advantage for S.typhimurium over the competing microbiota in the lumen of the inflamed gut. In Salmonella typhimurium (strain LT2 / SGSC1412 / ATCC 700720), this protein is Tetrathionate reductase subunit B (ttrB).